A 374-amino-acid chain; its full sequence is S-adenosylmethionine synthase 2 (374 aa).

Glu11 lines the Mg(2+) pocket. Position 17 (His17) interacts with ATP. Glu45 lines the K(+) pocket. L-methionine contacts are provided by Glu58 and Gln101. ATP is bound by residues 169–171, 237–240, Asp248, 254–255, Ala271, Lys275, and Lys279; these read DGK, SGRF, and RK. L-methionine is bound at residue Asp248. Lys279 serves as a coordination point for L-methionine.

Belongs to the AdoMet synthase family. Homotetramer. Requires Mn(2+) as cofactor. The cofactor is Mg(2+). Co(2+) is required as a cofactor. It depends on K(+) as a cofactor. Expressed in vegetative and reproductive tissues.

It localises to the cytoplasm. It carries out the reaction L-methionine + ATP + H2O = S-adenosyl-L-methionine + phosphate + diphosphate. It functions in the pathway amino-acid biosynthesis; S-adenosyl-L-methionine biosynthesis; S-adenosyl-L-methionine from L-methionine: step 1/1. In terms of biological role, catalyzes the formation of S-adenosylmethionine from methionine and ATP. The reaction comprises two steps that are both catalyzed by the same enzyme: formation of S-adenosylmethionine (AdoMet) and triphosphate, and subsequent hydrolysis of the triphosphate. In Pisum sativum (Garden pea), this protein is S-adenosylmethionine synthase 2 (SAMS2).